The chain runs to 312 residues: Adenylyl-sulfate kinase, chloroplastic (312 aa).

142–149 (GLSGSGKS) lines the ATP pocket. The active-site Phosphoserine intermediate is Ser216.

It belongs to the APS kinase family.

The protein resides in the plastid. It localises to the chloroplast. It catalyses the reaction adenosine 5'-phosphosulfate + ATP = 3'-phosphoadenylyl sulfate + ADP + H(+). The protein operates within sulfur metabolism; hydrogen sulfide biosynthesis; sulfite from sulfate: step 2/3. In terms of biological role, catalyzes the synthesis of activated sulfate. This Catharanthus roseus (Madagascar periwinkle) protein is Adenylyl-sulfate kinase, chloroplastic (AKN).